A 448-amino-acid chain; its full sequence is MDWKRSLKEKLRRDGYVRKSEQEMKEEEMSLFTNYYTEWKGGGKVSSAQNIPRFYYRLPAEDEVLQQKLREESRAVFLQRKSRELLDNEELQNLWFLLDKHQSPPLIGEEAMINYTNFQTVGEKAGEKCKTFFTSKVFSKLIPNDPYGRISIMQFFNYVMRKVWLHQTRIGLSLYDVAGQGYLRESDLENYILELIPTLPQLDGLEKSFYSFYVCTAVRKFFFFLDPLRTGKIKIQDILACSFLDDLLELRDEDLSKESQESNWFSAPSALRVYGQYLNLDKDHNGMLSKEELSRYGTGTLTCVFLDRVFQECLTYDGEMDYKTYLDFVLALENRKEPAALQYIFKLLDIENKGSLNVFSLNFFFRAIQEQMKIHGQEAVSFQDVKDEIFDMVKPKDPLRITLQDLIQSSQGDTVCSILIDLNGFWTYENREVLVANDGESPPDIDDT.

2 consecutive EF-hand domains span residues 268 to 303 (PSAL…TLTC) and 336 to 371 (KEPA…IQEQ). Ca(2+) is bound by residues Asp-281, Asp-283, Asn-285, Met-287, and Glu-292.

It localises to the nucleus. It is found in the cytoplasm. In terms of biological role, possible role in the regulation of cell death. The chain is Serine/threonine-protein phosphatase 2A regulatory subunit B'' subunit gamma (ppp2r3c) from Xenopus tropicalis (Western clawed frog).